A 614-amino-acid polypeptide reads, in one-letter code: Leucine-rich repeat protein soc-2 homolog (614 aa).

Disordered regions lie at residues 1 to 29 and 44 to 79; these read MNLC…SSGP and NSGG…PNLT. LRR repeat units follow at residues 134-155, 157-178, 180-201, 203-224, 226-247, 249-270, 272-293, 295-316, 318-340, 341-362, 365-386, 389-410, 413-434, 436-457, 459-480, 482-503, 505-526, 528-549, 551-573, and 575-596; these read GIKR…VREC, HLTE…IGCL, NLRN…LKHC, QLKV…IYRL, SLTT…LRQL, NLTM…IGAL, NLTT…IGNC, NLSA…IGNL, SLVR…KNCK, SMDE…MLAS, ALTT…GPAQ, NVYS…IFSR, GLTK…VGTW, NMVE…IMNL, NLEI…IGNL, KLRI…IGLL, ELQR…IGHL, NLTH…IGSL, SLEN…LALC, and NLKY…IQAG.

Belongs to the SHOC2 family.

Acts as a Ras effector and participates in MAPK pathway activation. Probably acts as a regulatory subunit of protein phosphatase that specifically dephosphorylates Raf kinase and stimulate Raf activity at specialized signaling complexes upon Ras activation. The sequence is that of Leucine-rich repeat protein soc-2 homolog (Sur-8) from Drosophila virilis (Fruit fly).